Consider the following 250-residue polypeptide: MGKLLLILGSVIALPTFAAGGGDLDASDYTGVSFWLVTAALLASTVFFFVERDRVSAKWKTSLTVSGLVTGIAFWHYMYMRGVWIETGDSPTVFRYIDWLLTVPLLICEFYLILAAATNVAGSLFKKLLVGSLVMLVFGYMGEAGIMAAWPAFIIGCLAWVYMIYELWAGEGKSACNTASPAVQSAYNTMMYIIIFGWAIYPVGYFTGYLMGDGGSALNLNLIYNLADFVNKILFGLIIWNVAVKESSNA.

The signal sequence occupies residues Met-1–Ala-18. At Ala-19 to Tyr-29 the chain is on the extracellular side. Residues Thr-30–Asp-53 form a helical membrane-spanning segment. At Arg-54–Lys-58 the chain is on the cytoplasmic side. The helical transmembrane segment at Trp-59–Thr-87 threads the bilayer. Topologically, residues Gly-88–Ser-90 are extracellular. Residues Pro-91–Thr-118 traverse the membrane as a helical segment. Residues Asn-119–Ala-121 lie on the Cytoplasmic side of the membrane. Residues Gly-122–Ala-144 form a helical membrane-spanning segment. Over Gly-145–Met-147 the chain is Extracellular. The chain crosses the membrane as a helical span at residues Ala-148–Asn-177. At Thr-178–Ser-180 the chain is on the cytoplasmic side. A helical transmembrane segment spans residues Pro-181–Gly-208. The Extracellular segment spans residues Tyr-209–Leu-218. Residues Asn-219–Asn-249 traverse the membrane as a helical segment. An N6-(retinylidene)lysine modification is found at Lys-232. Ala-250 is a topological domain (cytoplasmic).

It belongs to the archaeal/bacterial/fungal opsin family. In terms of assembly, homopentamer. GPR protomers assemble into a pentamer around a central pore with a C5 symmetry axis. Contains one covalently linked retinal chromophore per subunit.

The protein localises to the cell membrane. In terms of biological role, light-driven proton pump. This is Green-light absorbing proteorhodopsin from Unknown prokaryotic organism.